The primary structure comprises 453 residues: Trigger factor (453 aa).

Positions 171-256 (GDRVTISFKG…ATVLEAPQES (86 aa)) constitute a PPIase FKBP-type domain.

Belongs to the FKBP-type PPIase family. Tig subfamily.

The protein resides in the cytoplasm. The enzyme catalyses [protein]-peptidylproline (omega=180) = [protein]-peptidylproline (omega=0). Functionally, involved in protein export. Acts as a chaperone by maintaining the newly synthesized protein in an open conformation. Functions as a peptidyl-prolyl cis-trans isomerase. The protein is Trigger factor of Rhodopseudomonas palustris (strain BisB18).